The following is a 181-amino-acid chain: Mediator of RNA polymerase II transcription subunit 19 (181 aa).

Residues 120–181 form a disordered region; sequence GMPGPGKPGI…TDGERRRKRK (62 aa). Over residues 122 to 133 the composition is skewed to gly residues; it reads PGPGKPGIGPQV. Polar residues predominate over residues 143–158; the sequence is RSYNTESARESSNNEE.

It belongs to the Mediator complex subunit 19 family. Component of the Mediator complex.

It is found in the nucleus. In terms of biological role, component of the Mediator complex, a coactivator involved in the regulated transcription of nearly all RNA polymerase II-dependent genes. Mediator functions as a bridge to convey information from gene-specific regulatory proteins to the basal RNA polymerase II transcription machinery. Mediator is recruited to promoters by direct interactions with regulatory proteins and serves as a scaffold for the assembly of a functional preinitiation complex with RNA polymerase II and the general transcription factors. The protein is Mediator of RNA polymerase II transcription subunit 19 (ROX3) of Yarrowia lipolytica (strain CLIB 122 / E 150) (Yeast).